The chain runs to 134 residues: Large ribosomal subunit protein eL32 (134 aa).

This sequence belongs to the eukaryotic ribosomal protein eL32 family.

This chain is Large ribosomal subunit protein eL32 (rpl32e), found in Picrophilus torridus (strain ATCC 700027 / DSM 9790 / JCM 10055 / NBRC 100828 / KAW 2/3).